We begin with the raw amino-acid sequence, 287 residues long: Small ribosomal subunit protein uS3 (287 aa).

Residues 38–106 (IRRLLATGLE…QVQLNILEVK (69 aa)) form the KH type-2 domain. Positions 216–287 (AAAPAGADRP…AETTTQNPGS (72 aa)) are disordered. Low complexity predominate over residues 238-287 (SGASGTTATSTDAGRAASGTQEAPAAAEAAAGTEAAAGAAAETTTQNPGS).

Belongs to the universal ribosomal protein uS3 family. In terms of assembly, part of the 30S ribosomal subunit. Forms a tight complex with proteins S10 and S14.

In terms of biological role, binds the lower part of the 30S subunit head. Binds mRNA in the 70S ribosome, positioning it for translation. The sequence is that of Small ribosomal subunit protein uS3 from Mycobacterium sp. (strain JLS).